A 632-amino-acid chain; its full sequence is Biosynthetic arginine decarboxylase (632 aa).

N6-(pyridoxal phosphate)lysine is present on Lys101. 281-291 (FDVGGGLGVDY) contributes to the substrate binding site.

The protein belongs to the Orn/Lys/Arg decarboxylase class-II family. SpeA subfamily. Requires Mg(2+) as cofactor. Pyridoxal 5'-phosphate is required as a cofactor.

The catalysed reaction is L-arginine + H(+) = agmatine + CO2. The protein operates within amine and polyamine biosynthesis; agmatine biosynthesis; agmatine from L-arginine: step 1/1. Catalyzes the biosynthesis of agmatine from arginine. This chain is Biosynthetic arginine decarboxylase, found in Escherichia coli O157:H7 (strain EC4115 / EHEC).